The sequence spans 189 residues: NADH-quinone oxidoreductase subunit B (189 aa).

4 residues coordinate [4Fe-4S] cluster: Cys39, Cys40, Cys104, and Cys135.

This sequence belongs to the complex I 20 kDa subunit family. NDH-1 is composed of 14 different subunits. Subunits NuoB, C, D, E, F, and G constitute the peripheral sector of the complex. It depends on [4Fe-4S] cluster as a cofactor.

It localises to the cell inner membrane. It carries out the reaction a quinone + NADH + 5 H(+)(in) = a quinol + NAD(+) + 4 H(+)(out). Functionally, NDH-1 shuttles electrons from NADH, via FMN and iron-sulfur (Fe-S) centers, to quinones in the respiratory chain. The immediate electron acceptor for the enzyme in this species is believed to be a menaquinone. Couples the redox reaction to proton translocation (for every two electrons transferred, four hydrogen ions are translocated across the cytoplasmic membrane), and thus conserves the redox energy in a proton gradient. The sequence is that of NADH-quinone oxidoreductase subunit B from Chlorobium phaeovibrioides (strain DSM 265 / 1930) (Prosthecochloris vibrioformis (strain DSM 265)).